Here is a 3184-residue protein sequence, read N- to C-terminus: Cilia and flagella-associated protein 47 (3184 aa).

The region spanning Ser-1729–Pro-1851 is the Calponin-homology (CH) domain. A disordered region spans residues Arg-2491–Asp-2514. The span at Glu-2493–Thr-2502 shows a compositional bias: acidic residues.

As to quaternary structure, interacts with CFAP65. As to expression, highly expressed in spermatzoa (at protein level).

The protein resides in the cytoplasm. The protein localises to the cytoskeleton. It localises to the flagellum basal body. Functionally, plays a role in flagellar formation and sperm motility. The protein is Cilia and flagella-associated protein 47 of Mus musculus (Mouse).